Here is a 231-residue protein sequence, read N- to C-terminus: Orotidine 5'-phosphate decarboxylase (231 aa).

Substrate is bound by residues Asp11, Lys33, Asp60 to Thr69, Thr117, Arg178, Gln187, Gly207, and Arg208. Residue Lys62 is the Proton donor of the active site.

It belongs to the OMP decarboxylase family. Type 1 subfamily. In terms of assembly, homodimer.

It catalyses the reaction orotidine 5'-phosphate + H(+) = UMP + CO2. It functions in the pathway pyrimidine metabolism; UMP biosynthesis via de novo pathway; UMP from orotate: step 2/2. Catalyzes the decarboxylation of orotidine 5'-monophosphate (OMP) to uridine 5'-monophosphate (UMP). The sequence is that of Orotidine 5'-phosphate decarboxylase from Nitrosomonas eutropha (strain DSM 101675 / C91 / Nm57).